A 71-amino-acid polypeptide reads, in one-letter code: Protein MTH_1184 (71 aa).

The polypeptide is Protein MTH_1184 (Methanothermobacter thermautotrophicus (strain ATCC 29096 / DSM 1053 / JCM 10044 / NBRC 100330 / Delta H) (Methanobacterium thermoautotrophicum)).